The following is a 64-amino-acid chain: Large ribosomal subunit protein bL35 (64 aa).

Belongs to the bacterial ribosomal protein bL35 family.

This is Large ribosomal subunit protein bL35 from Colwellia psychrerythraea (strain 34H / ATCC BAA-681) (Vibrio psychroerythus).